Reading from the N-terminus, the 128-residue chain is Protein BEX2 (128 aa).

Residue arginine 50 is modified to Omega-N-methylarginine. The interval 107–128 is disordered; that stretch reads SLRAVSTDPPHHDHHDEFCLMP. Basic and acidic residues predominate over residues 115-128; sequence PPHHDHHDEFCLMP. Residues 117–121 form a his cluster region; the sequence is HHDHH. Cysteine 125 contributes to the Zn(2+) binding site.

The protein belongs to the BEX family. In terms of assembly, interacts with LMO2, possibly leading to regulate the transcriptional activity of a DNA-binding complex containing LMO2. Interacts with OMP. Expressed in central nervous system, with high level in pituitary, cerebellum and temporal lobe. Widely expressed in breast cancer cell lines.

It is found in the cytoplasm. It localises to the nucleus. Functionally, regulator of mitochondrial apoptosis and G1 cell cycle in breast cancer. Protects the breast cancer cells against mitochondrial apoptosis and this effect is mediated through the modulation of BCL2 protein family, which involves the positive regulation of anti-apoptotic member BCL2 and the negative regulation of pro-apoptotic members BAD, BAK1 and PUMA. Required for the normal cell cycle progression during G1 in breast cancer cells through the regulation of CCND1 and CDKN1A. Regulates the level of PP2A regulatory subunit B and PP2A phosphatase activity. In absence of reductive stress, acts as a pseudosubstrate for the CRL2(FEM1B) complex: associates with FEM1B via zinc, thereby preventing association between FEM1B and its substrates. The polypeptide is Protein BEX2 (BEX2) (Homo sapiens (Human)).